The sequence spans 127 residues: Fumarate reductase subunit C (127 aa).

3 helical membrane passes run 30–50, 67–87, and 107–127; these read ATVLPLILFTLFLTVGLGSLV, LVIAINLVALAGSLFHAQTFF, and IIVLAQWAAVAFISLIVLIVV.

This sequence belongs to the FrdC family. Part of an enzyme complex containing four subunits: a flavoprotein (FrdA), an iron-sulfur protein (FrdB), and two hydrophobic anchor proteins (FrdC and FrdD).

Its subcellular location is the cell inner membrane. Anchors the catalytic components of the fumarate reductase complex to the cell membrane, binds quinones. In Vibrio cholerae serotype O1 (strain ATCC 39541 / Classical Ogawa 395 / O395), this protein is Fumarate reductase subunit C.